A 247-amino-acid polypeptide reads, in one-letter code: UPF0259 membrane protein BUAPTUC7_273 (247 aa).

Transmembrane regions (helical) follow at residues 20–40 (IGAI…IDMF), 85–105 (IMES…LISF), 114–134 (IVSS…LNFL), 137–157 (FIIQ…SIIL), 188–208 (IIGP…MLLA), and 218–238 (LFLI…IYLF).

This sequence belongs to the UPF0259 family.

Its subcellular location is the cell membrane. In Buchnera aphidicola subsp. Acyrthosiphon pisum (strain Tuc7), this protein is UPF0259 membrane protein BUAPTUC7_273.